The sequence spans 208 residues: Floral homeotic protein PISTILLATA (208 aa).

The MADS-box domain occupies 3 to 57 (RGKIEIKRIENANNRVVTFSKRRNGLVKKAKEITVLCDAKVALIIFASNGKMIDY). The stretch at 75-117 (SGKKLWDAKHENLSNEIDRIKKENDSLQLELRHLKGEDIQSLN) forms a coiled coil. Positions 84 to 170 (HENLSNEIDR…TFQLQQQEMA (87 aa)) constitute a K-box domain.

Forms a heterodimer with APETALA3, capable of binding to CArG-box sequences. AP3/PI heterodimer binds AP1 or SEP3 to form a ternary complex.

The protein resides in the nucleus. In terms of biological role, probable transcription factor involved in the genetic control of flower development. Is required for normal development of petals and stamens in the wild-type flower. Forms a heterodimer with APETALA3 that is required for autoregulation of both AP3 and PI genes. AP3/PI heterodimer interacts with APETALA1 or SEPALLATA3 to form a ternary complex that could be responsible for the regulation of the genes involved in the flower development. AP3/PI heterodimer activates the expression of NAP. AP3/PI prevents GATA22/GNL and GATA21/GNC expression. The sequence is that of Floral homeotic protein PISTILLATA (PI) from Arabidopsis thaliana (Mouse-ear cress).